Consider the following 595-residue polypeptide: Putative laccase-18 (595 aa).

The signal sequence occupies residues 1-29 (MEKLSTAASLFGVVVAATALAMAVVGGEA). Plastocyanin-like domains lie at 37 to 153 (MVHE…PRDG) and 162 to 316 (KDVP…YTGA). Residues N42 and N48 are each glycosylated (N-linked (GlcNAc...) asparagine). Residues H87 and H89 each contribute to the Cu cation site. N121 carries N-linked (GlcNAc...) asparagine glycosylation. Residues H132 and H134 each contribute to the Cu cation site. N-linked (GlcNAc...) asparagine glycans are attached at residues N206, N345, N382, N402, N409, N439, and N470. In terms of domain architecture, Plastocyanin-like 3 spans 429–571 (DFPVRPPRPF…ATAFIVEDGP (143 aa)). Cu cation is bound by residues N488, H491, H493, H550, C551, H552, H556, and M561. Positions 570–595 (GPTPETSLPPPPPEFKRCGTNGLSQP) are disordered.

Belongs to the multicopper oxidase family. Cu cation is required as a cofactor.

It localises to the secreted. The protein resides in the extracellular space. Its subcellular location is the apoplast. It catalyses the reaction 4 hydroquinone + O2 = 4 benzosemiquinone + 2 H2O. In terms of biological role, lignin degradation and detoxification of lignin-derived products. The protein is Putative laccase-18 (LAC18) of Oryza sativa subsp. indica (Rice).